A 113-amino-acid chain; its full sequence is Hydrogenase maturation factor HypA (113 aa).

Residue His2 participates in Ni(2+) binding. Cys70, Cys73, Cys86, and Cys88 together coordinate Zn(2+).

This sequence belongs to the HypA/HybF family.

Functionally, involved in the maturation of [NiFe] hydrogenases. Required for nickel insertion into the metal center of the hydrogenase. The chain is Hydrogenase maturation factor HypA from Nostoc punctiforme (strain ATCC 29133 / PCC 73102).